We begin with the raw amino-acid sequence, 814 residues long: Rho GTPase-activating protein 44 (814 aa).

A BAR domain is found at 14–249 (QTVGRAEKTE…IKAQQEAWVE (236 aa)). A Rho-GAP domain is found at 255–445 (KPLEEHLMIS…PIIQHADWFF (191 aa)). 3 disordered regions span residues 467–493 (ANYS…RPLS), 531–768 (SAGR…SMST), and 784–814 (STLR…STAL). Residues 479 to 489 (PADRRQPEQAR) are compositionally biased toward basic and acidic residues. Position 493 is a phosphoserine (Ser-493). Composition is skewed to low complexity over residues 531–541 (SAGRKAACAPP), 567–581 (SPAT…SGAS), 598–612 (SPGS…SIQG), 622–637 (PQPA…DQSP), 684–704 (SPYG…LSPA), and 741–752 (SVSLSASSPQST). Positions 727-814 (KPRQRPTLPP…SEEESESTAL (88 aa)) are interaction with BST2. Basic and acidic residues predominate over residues 790-805 (PLEHARRHSVTDKRDS). Ser-805 bears the Phosphoserine mark. The PDZ-binding motif lies at 811–814 (STAL).

As to quaternary structure, interacts with BST2 (via cytoplasmic domain). Interacts (probably via PDZ-binding motif) with SHANK3 (via PDZ domain); the interaction takes place in dendritic spines and promotes GRIA1 exocytosis. In terms of tissue distribution, expressed in brain, detected at high levels in hippocampal CA1 (at protein level).

It is found in the cell projection. The protein resides in the dendritic spine. The protein localises to the recycling endosome. It localises to the presynapse. Its subcellular location is the dendrite. Functionally, GTPase-activating protein (GAP) that stimulates the GTPase activity of Rho-type GTPases. Thereby, controls Rho-type GTPases cycling between their active GTP-bound and inactive GDP-bound states. Acts as a GAP at least for CDC42 and RAC1. In neurons, is involved in dendritic spine formation and synaptic plasticity in a specific RAC1-GAP activity. Limits the initiation of exploratory dendritic filopodia. Recruited to actin-patches that seed filopodia, binds specifically to plasma membrane sections that are deformed inward by acto-myosin mediated contractile forces. Acts through GAP activity on RAC1 to reduce actin polymerization necessary for filopodia formation. In association with SHANK3, promotes GRIA1 exocytosis from recycling endosomes and spine morphological changes associated to long-term potentiation. This Rattus norvegicus (Rat) protein is Rho GTPase-activating protein 44.